Here is a 102-residue protein sequence, read N- to C-terminus: Small ribosomal subunit protein uS10 (102 aa).

This sequence belongs to the universal ribosomal protein uS10 family. As to quaternary structure, part of the 30S ribosomal subunit.

In terms of biological role, involved in the binding of tRNA to the ribosomes. This Pyrococcus abyssi (strain GE5 / Orsay) protein is Small ribosomal subunit protein uS10.